The primary structure comprises 200 residues: Ciliary neurotrophic factor (200 aa).

It belongs to the CNTF family. In terms of tissue distribution, nervous system.

Its subcellular location is the cytoplasm. Functionally, CNTF is a survival factor for various neuronal cell types. Seems to prevent the degeneration of motor axons after axotomy. The protein is Ciliary neurotrophic factor (Cntf) of Rattus norvegicus (Rat).